The primary structure comprises 193 residues: Adenylate kinase (193 aa).

10–15 (GAGKGT) serves as a coordination point for ATP. The interval 30 to 59 (STGDMLRAAVKAGTPIGLKAKAVMDAGGLV) is NMP. AMP-binding positions include Thr31, Arg36, 57 to 59 (GLV), 85 to 88 (GFPR), and Gln92. The tract at residues 126–142 (KRAKETLAAGGTVRADD) is LID. Arg127 serves as a coordination point for ATP. AMP-binding residues include Arg139 and Arg150. Ala178 is an ATP binding site.

It belongs to the adenylate kinase family. Monomer.

It localises to the cytoplasm. The enzyme catalyses AMP + ATP = 2 ADP. It participates in purine metabolism; AMP biosynthesis via salvage pathway; AMP from ADP: step 1/1. Functionally, catalyzes the reversible transfer of the terminal phosphate group between ATP and AMP. Plays an important role in cellular energy homeostasis and in adenine nucleotide metabolism. The protein is Adenylate kinase of Beijerinckia indica subsp. indica (strain ATCC 9039 / DSM 1715 / NCIMB 8712).